A 661-amino-acid chain; its full sequence is UvrABC system protein B (661 aa).

The Helicase ATP-binding domain maps to aspartate 31–phenylalanine 186. Residue glycine 44–threonine 51 coordinates ATP. A Beta-hairpin motif is present at residues tyrosine 97 to valine 120. In terms of domain architecture, Helicase C-terminal spans glutamine 435–isoleucine 601. Residues lysine 626–methionine 661 enclose the UVR domain.

This sequence belongs to the UvrB family. In terms of assembly, forms a heterotetramer with UvrA during the search for lesions. Interacts with UvrC in an incision complex.

Its subcellular location is the cytoplasm. Functionally, the UvrABC repair system catalyzes the recognition and processing of DNA lesions. A damage recognition complex composed of 2 UvrA and 2 UvrB subunits scans DNA for abnormalities. Upon binding of the UvrA(2)B(2) complex to a putative damaged site, the DNA wraps around one UvrB monomer. DNA wrap is dependent on ATP binding by UvrB and probably causes local melting of the DNA helix, facilitating insertion of UvrB beta-hairpin between the DNA strands. Then UvrB probes one DNA strand for the presence of a lesion. If a lesion is found the UvrA subunits dissociate and the UvrB-DNA preincision complex is formed. This complex is subsequently bound by UvrC and the second UvrB is released. If no lesion is found, the DNA wraps around the other UvrB subunit that will check the other stand for damage. The chain is UvrABC system protein B from Streptococcus suis (strain 98HAH33).